We begin with the raw amino-acid sequence, 271 residues long: MAPRGLPGSAVLAAAVFVGGAVSSPLVRSDHSGSHPLPSKTETTPSPTNNNGNGHPEYIAYALVPVFFVMGLFGVLICHLLKKKGYRCTTEAEQDVEGEKVEKIELNDSVNENSDTVGQIVQYIMKNEANVDILAAMVEDNNVCDPESPVTPSTPGSPPVSPGPLSPGVTPGKHICGHHLHTVGGPVERDVCHRCRHKRWHFIKPTNKSKEGRPRRQGEVTVLSVGRFRVTKVEPKSNQKERRSLMSVSGTDSVNGEVPVTPVKRQQSDSE.

The N-terminal stretch at 1-23 is a signal peptide; that stretch reads MAPRGLPGSAVLAAAVFVGGAVS. Topologically, residues 24-57 are extracellular; sequence SPLVRSDHSGSHPLPSKTETTPSPTNNNGNGHPE. The interval 27–52 is disordered; that stretch reads VRSDHSGSHPLPSKTETTPSPTNNNG. Positions 36–52 are enriched in low complexity; it reads PLPSKTETTPSPTNNNG. Residues 58-78 traverse the membrane as a helical segment; the sequence is YIAYALVPVFFVMGLFGVLIC. The Cytoplasmic segment spans residues 79-271; the sequence is HLLKKKGYRC…PVKRQQSDSE (193 aa). Residues Ser-109 and Ser-114 each carry the phosphoserine modification. Disordered regions lie at residues 144–168 and 231–271; these read CDPE…LSPG and TKVE…SDSE. The segment covering 155 to 165 has biased composition (pro residues); that stretch reads PGSPPVSPGPL. Basic and acidic residues predominate over residues 231 to 244; sequence TKVEPKSNQKERRS. Phosphoserine occurs at positions 244 and 247.

It belongs to the RELT family. As to quaternary structure, interacts with RELT, RELL2, OXSR1 and PLSCR1.

It localises to the cell membrane. Functionally, induces activation of MAPK14/p38 cascade, when overexpressed. Induces apoptosis, when overexpressed. The polypeptide is RELT-like protein 1 (RELL1) (Bos taurus (Bovine)).